Reading from the N-terminus, the 68-residue chain is MPKMKSHSGTKKRFKVTGSGKVTARKAGKRHLNEHKSSRVTRRLTGETVLSKGEAAKVKKLLAGHPGR.

Composition is skewed to basic residues over residues 1-15 and 23-38; these read MPKM…KRFK and TARK…HKSS. A disordered region spans residues 1–38; that stretch reads MPKMKSHSGTKKRFKVTGSGKVTARKAGKRHLNEHKSS.

Belongs to the bacterial ribosomal protein bL35 family.

The sequence is that of Large ribosomal subunit protein bL35 from Cutibacterium acnes (strain DSM 16379 / KPA171202) (Propionibacterium acnes).